We begin with the raw amino-acid sequence, 469 residues long: Neuraminidase (469 aa).

Over 1–9 (MNPNQKIIT) the chain is Intravirion. Residues 10–30 (IGSVSLTIATICFLMQIAILV) form a helical membrane-spanning segment. The segment at 11–33 (GSVSLTIATICFLMQIAILVTTV) is involved in apical transport and lipid raft association. At 31–469 (TTVTLHFKQY…DGADINLMPI (439 aa)) the chain is on the virion surface side. Residues 36-88 (HFKQYECDSPANNQVMPCEPIIIERNITEIVYLTNTTIEKEICPKLVEYRNWS) are hypervariable stalk region. Residues Asn61, Asn70, and Asn86 are each glycosylated (N-linked (GlcNAc...) asparagine; by host). Positions 91–469 (QCKITGFAPF…DGADINLMPI (379 aa)) are head of neuraminidase. 8 cysteine pairs are disulfide-bonded: Cys92–Cys417, Cys124–Cys129, Cys183–Cys230, Cys232–Cys237, Cys278–Cys291, Cys280–Cys289, Cys318–Cys337, and Cys421–Cys447. Arg118 is a substrate binding site. Asn146 is a glycosylation site (N-linked (GlcNAc...) asparagine; by host). Asp151 functions as the Proton donor/acceptor in the catalytic mechanism. Position 152 (Arg152) interacts with substrate. N-linked (GlcNAc...) asparagine; by host glycosylation is found at Asn200 and Asn234. Residue 276-277 (EE) participates in substrate binding. Arg292 lines the substrate pocket. Ca(2+)-binding residues include Asp293, Gly297, and Asp324. A substrate-binding site is contributed by Arg371. An N-linked (GlcNAc...) asparagine; by host glycan is attached at Asn402. The active-site Nucleophile is the Tyr406.

Belongs to the glycosyl hydrolase 34 family. Homotetramer. Ca(2+) is required as a cofactor. N-glycosylated.

The protein resides in the virion membrane. The protein localises to the host apical cell membrane. It carries out the reaction Hydrolysis of alpha-(2-&gt;3)-, alpha-(2-&gt;6)-, alpha-(2-&gt;8)- glycosidic linkages of terminal sialic acid residues in oligosaccharides, glycoproteins, glycolipids, colominic acid and synthetic substrates.. Inhibited by the neuraminidase inhibitors zanamivir (Relenza) and oseltamivir (Tamiflu). These drugs interfere with the release of progeny virus from infected cells and are effective against all influenza strains. Resistance to neuraminidase inhibitors is quite rare. Functionally, catalyzes the removal of terminal sialic acid residues from viral and cellular glycoconjugates. Cleaves off the terminal sialic acids on the glycosylated HA during virus budding to facilitate virus release. Additionally helps virus spread through the circulation by further removing sialic acids from the cell surface. These cleavages prevent self-aggregation and ensure the efficient spread of the progeny virus from cell to cell. Otherwise, infection would be limited to one round of replication. Described as a receptor-destroying enzyme because it cleaves a terminal sialic acid from the cellular receptors. May facilitate viral invasion of the upper airways by cleaving the sialic acid moieties on the mucin of the airway epithelial cells. Likely to plays a role in the budding process through its association with lipid rafts during intracellular transport. May additionally display a raft-association independent effect on budding. Plays a role in the determination of host range restriction on replication and virulence. Sialidase activity in late endosome/lysosome traffic seems to enhance virus replication. In Influenza A virus (strain A/Udorn/307/1972 H3N2), this protein is Neuraminidase.